Here is a 470-residue protein sequence, read N- to C-terminus: D-serine/D-alanine/glycine transporter (470 aa).

12 helical membrane-spanning segments follow: residues 30–50, 51–71, 102–122, 137–157, 162–182, 211–231, 256–276, 283–303, 350–370, 371–391, 413–433, and 441–461; these read LIAI…KTIS, LAGP…FFVM, FTGW…VVAI, VASL…VKMF, FWFA…GLVM, LSGF…IELV, IIMF…WSSV, FVEL…NFVV, FSCI…SVIG, AFTM…TIIL, PLGK…VVLL, and QALL…LFIG.

It belongs to the amino acid-polyamine-organocation (APC) superfamily. Amino acid transporter (AAT) (TC 2.A.3.1) family.

It is found in the cell inner membrane. The enzyme catalyses D-alanine(in) + H(+)(in) = D-alanine(out) + H(+)(out). It catalyses the reaction D-serine(out) + H(+)(out) = D-serine(in) + H(+)(in). The catalysed reaction is glycine(in) + H(+)(in) = glycine(out) + H(+)(out). Functionally, permease that is involved in the transport across the cytoplasmic membrane of D-alanine, D-serine and glycine. The polypeptide is D-serine/D-alanine/glycine transporter (cycA) (Escherichia coli O157:H7).